A 625-amino-acid polypeptide reads, in one-letter code: Phosphomethylpyrimidine synthase (625 aa).

Substrate contacts are provided by residues asparagine 231, methionine 260, tyrosine 289, histidine 325, 345-347 (SRG), 386-389 (DGLR), and glutamate 425. Histidine 429 is a Zn(2+) binding site. Substrate is bound at residue tyrosine 452. Histidine 493 serves as a coordination point for Zn(2+). Residues cysteine 573, cysteine 576, and cysteine 581 each contribute to the [4Fe-4S] cluster site.

Belongs to the ThiC family. In terms of assembly, homodimer. The cofactor is [4Fe-4S] cluster.

The catalysed reaction is 5-amino-1-(5-phospho-beta-D-ribosyl)imidazole + S-adenosyl-L-methionine = 4-amino-2-methyl-5-(phosphooxymethyl)pyrimidine + CO + 5'-deoxyadenosine + formate + L-methionine + 3 H(+). It participates in cofactor biosynthesis; thiamine diphosphate biosynthesis. In terms of biological role, catalyzes the synthesis of the hydroxymethylpyrimidine phosphate (HMP-P) moiety of thiamine from aminoimidazole ribotide (AIR) in a radical S-adenosyl-L-methionine (SAM)-dependent reaction. The sequence is that of Phosphomethylpyrimidine synthase from Acinetobacter baumannii (strain AB0057).